The following is an 80-amino-acid chain: Conotoxin Cl9.5 (80 aa).

An N-terminal signal peptide occupies residues 1 to 23 (MNCYLILTVALLLTSAMTGTTTA). A propeptide spanning residues 24-37 (GQLNTKGVTLREDD) is cleaved from the precursor. 3 disulfides stabilise this stretch: C42-C59, C47-C69, and C49-C74.

As to expression, expressed by the venom duct.

It localises to the secreted. The chain is Conotoxin Cl9.5 from Californiconus californicus (California cone).